The sequence spans 131 residues: Holo-[acyl-carrier-protein] synthase (131 aa).

2 residues coordinate Mg(2+): D8 and E59.

This sequence belongs to the P-Pant transferase superfamily. AcpS family. Mg(2+) serves as cofactor.

The protein resides in the cytoplasm. The enzyme catalyses apo-[ACP] + CoA = holo-[ACP] + adenosine 3',5'-bisphosphate + H(+). Its function is as follows. Transfers the 4'-phosphopantetheine moiety from coenzyme A to a Ser of acyl-carrier-protein. This Rickettsia massiliae (strain Mtu5) protein is Holo-[acyl-carrier-protein] synthase.